We begin with the raw amino-acid sequence, 492 residues long: DEAD-box ATP-dependent RNA helicase RhpA (492 aa).

A Q motif motif is present at residues 20-48; sequence PSFNDLGLKESVLKSVYEAGFTSPSPIQE. Residues 51-220 form the Helicase ATP-binding domain; that stretch reads IPAVLQGRDV…DKILENPIKI (170 aa). Residue 64 to 71 coordinates ATP; the sequence is AQTGTGKT. The DEAD box motif lies at 168–171; it reads DESD. In terms of domain architecture, Helicase C-terminal spans 231 to 393; sequence DITQRFYVIN…EIPTINENQI (163 aa). Residues 445–492 are disordered; sequence AIQNPKEKTPKPSNKKTPQHERARSFKKGQHRDRHPKTNHYSKKPKRR. The segment covering 469 to 492 has biased composition (basic residues); sequence SFKKGQHRDRHPKTNHYSKKPKRR.

The protein belongs to the DEAD box helicase family. In terms of assembly, homodimer. Interacts with RNase J (rnj), might be a member of a minimal RNA degradosome complex.

It is found in the cytoplasm. The enzyme catalyses ATP + H2O = ADP + phosphate + H(+). In terms of biological role, DEAD-box RNA helicase probably involved in RNA degradation. Unwinds dsRNA in both 5'- and 3'-directions. This chain is DEAD-box ATP-dependent RNA helicase RhpA (rhpA), found in Helicobacter pylori (strain ATCC 700392 / 26695) (Campylobacter pylori).